A 251-amino-acid chain; its full sequence is tRNA (guanine-N(7)-)-methyltransferase (251 aa).

Residues Glu-80, Glu-105, Asp-132, and Asp-155 each coordinate S-adenosyl-L-methionine. Residue Asp-155 is part of the active site. Residues Lys-159, Asp-191, and 228–231 each bind substrate; that span reads TKFE.

This sequence belongs to the class I-like SAM-binding methyltransferase superfamily. TrmB family.

It catalyses the reaction guanosine(46) in tRNA + S-adenosyl-L-methionine = N(7)-methylguanosine(46) in tRNA + S-adenosyl-L-homocysteine. Its pathway is tRNA modification; N(7)-methylguanine-tRNA biosynthesis. In terms of biological role, catalyzes the formation of N(7)-methylguanine at position 46 (m7G46) in tRNA. In Histophilus somni (strain 129Pt) (Haemophilus somnus), this protein is tRNA (guanine-N(7)-)-methyltransferase.